The following is a 376-amino-acid chain: Phospho-N-acetylmuramoyl-pentapeptide-transferase (376 aa).

Transmembrane regions (helical) follow at residues 28 to 48 (RTIMATITAMVLTFVLAPWFI), 76 to 96 (TMGGALILLSLLLPTVLWADL), 100 to 120 (FVLATTAVTAGYGVIGYLDDF), 135 to 155 (YKLIGQVLIGGAAVAYTFLLA), 179 to 199 (YPIELPLYVYIPFAVFVVVAT), 211 to 231 (GLAIGPVIINAGTYLILAYIV), 252 to 272 (AGELSVYCGSVIGAGIGFLWY), 279 to 299 (VFMGDVGSLALGGGLGMLAVF), 307 to 327 (IILGGIFFIETVSVITQVLSF), and 353 to 373 (KIIVRFWIISILLALVSLASM).

It belongs to the glycosyltransferase 4 family. MraY subfamily. It depends on Mg(2+) as a cofactor.

It localises to the cell inner membrane. It carries out the reaction UDP-N-acetyl-alpha-D-muramoyl-L-alanyl-gamma-D-glutamyl-meso-2,6-diaminopimeloyl-D-alanyl-D-alanine + di-trans,octa-cis-undecaprenyl phosphate = di-trans,octa-cis-undecaprenyl diphospho-N-acetyl-alpha-D-muramoyl-L-alanyl-D-glutamyl-meso-2,6-diaminopimeloyl-D-alanyl-D-alanine + UMP. The protein operates within cell wall biogenesis; peptidoglycan biosynthesis. Catalyzes the initial step of the lipid cycle reactions in the biosynthesis of the cell wall peptidoglycan: transfers peptidoglycan precursor phospho-MurNAc-pentapeptide from UDP-MurNAc-pentapeptide onto the lipid carrier undecaprenyl phosphate, yielding undecaprenyl-pyrophosphoryl-MurNAc-pentapeptide, known as lipid I. The polypeptide is Phospho-N-acetylmuramoyl-pentapeptide-transferase (Sorangium cellulosum (strain So ce56) (Polyangium cellulosum (strain So ce56))).